Consider the following 285-residue polypeptide: Lipoyl synthase (285 aa).

[4Fe-4S] cluster contacts are provided by cysteine 36, cysteine 41, cysteine 47, cysteine 62, cysteine 66, cysteine 69, and serine 275. Positions 48 to 264 (FSKKTATFLI…KEYAISIGFK (217 aa)) constitute a Radical SAM core domain.

The protein belongs to the radical SAM superfamily. Lipoyl synthase family. [4Fe-4S] cluster serves as cofactor.

Its subcellular location is the cytoplasm. It carries out the reaction [[Fe-S] cluster scaffold protein carrying a second [4Fe-4S](2+) cluster] + N(6)-octanoyl-L-lysyl-[protein] + 2 oxidized [2Fe-2S]-[ferredoxin] + 2 S-adenosyl-L-methionine + 4 H(+) = [[Fe-S] cluster scaffold protein] + N(6)-[(R)-dihydrolipoyl]-L-lysyl-[protein] + 4 Fe(3+) + 2 hydrogen sulfide + 2 5'-deoxyadenosine + 2 L-methionine + 2 reduced [2Fe-2S]-[ferredoxin]. It participates in protein modification; protein lipoylation via endogenous pathway; protein N(6)-(lipoyl)lysine from octanoyl-[acyl-carrier-protein]: step 2/2. Catalyzes the radical-mediated insertion of two sulfur atoms into the C-6 and C-8 positions of the octanoyl moiety bound to the lipoyl domains of lipoate-dependent enzymes, thereby converting the octanoylated domains into lipoylated derivatives. This Caldicellulosiruptor saccharolyticus (strain ATCC 43494 / DSM 8903 / Tp8T 6331) protein is Lipoyl synthase.